The chain runs to 26 residues: Halocyntin (26 aa).

Has strong antibacterial activity against the Gram-positive bacteria M.luteus, S.aureus, B.megaterium, A.viridans and E.faecalis, and against the Gram-negative bacterium K.pneumoniae. Has less potent antibacterial activity against the Gram-negative bacteria E.coli DH5alpha, S.typhimurium, P.aeruginosa, E.aerogenes and N.gonorrhoeae. Has moderate hemolytic activity against sheep erythrocytes. The polypeptide is Halocyntin (Halocynthia papillosa (Red sea-squirt)).